Consider the following 378-residue polypeptide: 3-dehydroquinate synthase (378 aa).

NAD(+) is bound by residues 115 to 119 (GVVGD), 139 to 140 (TS), lysine 152, and lysine 161. Residues glutamate 194, histidine 256, and histidine 275 each coordinate Zn(2+).

This sequence belongs to the sugar phosphate cyclases superfamily. Dehydroquinate synthase family. Co(2+) serves as cofactor. The cofactor is Zn(2+). NAD(+) is required as a cofactor.

The protein localises to the cytoplasm. It carries out the reaction 7-phospho-2-dehydro-3-deoxy-D-arabino-heptonate = 3-dehydroquinate + phosphate. Its pathway is metabolic intermediate biosynthesis; chorismate biosynthesis; chorismate from D-erythrose 4-phosphate and phosphoenolpyruvate: step 2/7. Functionally, catalyzes the conversion of 3-deoxy-D-arabino-heptulosonate 7-phosphate (DAHP) to dehydroquinate (DHQ). In Brucella anthropi (strain ATCC 49188 / DSM 6882 / CCUG 24695 / JCM 21032 / LMG 3331 / NBRC 15819 / NCTC 12168 / Alc 37) (Ochrobactrum anthropi), this protein is 3-dehydroquinate synthase.